Reading from the N-terminus, the 129-residue chain is UPF0102 protein CT2262 (129 aa).

It belongs to the UPF0102 family.

The chain is UPF0102 protein CT2262 from Chlorobaculum tepidum (strain ATCC 49652 / DSM 12025 / NBRC 103806 / TLS) (Chlorobium tepidum).